The sequence spans 206 residues: MKFEITTLDGGEAGSVEVNEAIFGLEPRADLLQRCVRWQLAKRQAGTHKVKTRSEISRTTKKMYKQKGTGNARHGAASAPQFRGGARAFGPVVRSHAHDLPKKVRALALRHALSAKARAASLVVVDDVRLEDGKTKALKDRFGALGWSNALIIGGAEVDENFGRAARNLPSIDVLPVQGINVYDILRRDKLVLTRAAVDALEARFK.

The segment at 49–79 (KVKTRSEISRTTKKMYKQKGTGNARHGAASA) is disordered.

The protein belongs to the universal ribosomal protein uL4 family. In terms of assembly, part of the 50S ribosomal subunit.

Functionally, one of the primary rRNA binding proteins, this protein initially binds near the 5'-end of the 23S rRNA. It is important during the early stages of 50S assembly. It makes multiple contacts with different domains of the 23S rRNA in the assembled 50S subunit and ribosome. Forms part of the polypeptide exit tunnel. This chain is Large ribosomal subunit protein uL4, found in Methylobacterium sp. (strain 4-46).